The chain runs to 354 residues: Fructose-bisphosphate aldolase (354 aa).

Residue Ser-61 participates in D-glyceraldehyde 3-phosphate binding. Asp-104 (proton donor) is an active-site residue. His-105, Asp-139, Glu-169, and His-221 together coordinate Zn(2+). Gly-222 is a binding site for dihydroxyacetone phosphate. His-260 contacts Zn(2+). Residues 261 to 263 (GGS) and 282 to 285 (NIDT) each bind dihydroxyacetone phosphate.

It belongs to the class II fructose-bisphosphate aldolase family. As to quaternary structure, homodimer. Zn(2+) serves as cofactor.

It carries out the reaction beta-D-fructose 1,6-bisphosphate = D-glyceraldehyde 3-phosphate + dihydroxyacetone phosphate. The protein operates within carbohydrate degradation; glycolysis; D-glyceraldehyde 3-phosphate and glycerone phosphate from D-glucose: step 4/4. Its function is as follows. Catalyzes the aldol condensation of dihydroxyacetone phosphate (DHAP or glycerone-phosphate) with glyceraldehyde 3-phosphate (G3P) to form fructose 1,6-bisphosphate (FBP) in gluconeogenesis and the reverse reaction in glycolysis. In Campylobacter jejuni subsp. jejuni serotype O:23/36 (strain 81-176), this protein is Fructose-bisphosphate aldolase (fba).